Here is a 249-residue protein sequence, read N- to C-terminus: 5'-nucleotidase SurE (249 aa).

Residues Asp8, Asp9, Ser39, and Asn91 each contribute to the a divalent metal cation site.

This sequence belongs to the SurE nucleotidase family. It depends on a divalent metal cation as a cofactor.

The protein localises to the cytoplasm. The catalysed reaction is a ribonucleoside 5'-phosphate + H2O = a ribonucleoside + phosphate. Nucleotidase that shows phosphatase activity on nucleoside 5'-monophosphates. This is 5'-nucleotidase SurE from Haemophilus influenzae (strain ATCC 51907 / DSM 11121 / KW20 / Rd).